Consider the following 435-residue polypeptide: Transcription activator AKTR-2 (435 aa).

The zn(2)-C6 fungal-type DNA-binding region spans 16-43; it reads CDFCTQSKLRCNKNKPSCRRCTIQQQVC. Residues 49-103 form a disordered region; the sequence is RRTGRPPKHPRRADDSQETSGQHGHQDPMTSAPADSCEQQSSHLDLEGDDTDFTL. The span at 50 to 59 shows a compositional bias: basic residues; the sequence is RTGRPPKHPR.

It is found in the nucleus. Functionally, transcription factor that regulates the expression of the gene clusters that mediate the biosynthesis of the host-selective toxins (HSTs) AK-toxins responsible for Japanese pear black spot disease by the Japanese pear pathotype. AK-toxins are esters of 9,10-epoxy 8-hydroxy 9-methyldecatrienoic acid (EDA). On cellular level, AK-toxins affect plasma membrane of susceptible cells and cause a sudden increase in loss of K(+) after a few minutes of toxin treatment. The sequence is that of Transcription activator AKTR-2 from Alternaria alternata (Alternaria rot fungus).